Reading from the N-terminus, the 364-residue chain is Adenosine 3'-phospho 5'-phosphosulfate transporter 2 (364 aa).

A run of 10 helical transmembrane segments spans residues 39–59 (WLQF…YGYM), 74–94 (WTLT…ECII), 106–126 (IYGV…ASVG), 131–151 (PTQV…GILI), 157–177 (GWID…FTLA), 187–206 (SRGY…IGNI), 231–251 (VFIF…PFFL), 257–277 (TFGY…VVLT), 281–301 (VFGA…TIIL), and 310–330 (FTIE…LNLY).

The protein belongs to the nucleotide-sugar transporter family. SLC35B subfamily.

The protein localises to the golgi apparatus membrane. Its function is as follows. Mediates the transport of adenosine 3'-phospho 5'-phosphosulfate (PAPS), from cytosol into Golgi. PAPS is a universal sulfuryl donor for sulfation events that take place in the Golgi. This chain is Adenosine 3'-phospho 5'-phosphosulfate transporter 2 (pst-2), found in Caenorhabditis elegans.